Here is a 425-residue protein sequence, read N- to C-terminus: Serine--tRNA ligase (425 aa).

Residue T228–E230 coordinates L-serine. R259–E261 contacts ATP. E282 is an L-serine binding site. E346 to S349 serves as a coordination point for ATP. An L-serine-binding site is contributed by S382.

This sequence belongs to the class-II aminoacyl-tRNA synthetase family. Type-1 seryl-tRNA synthetase subfamily. Homodimer. The tRNA molecule binds across the dimer.

The protein resides in the cytoplasm. The enzyme catalyses tRNA(Ser) + L-serine + ATP = L-seryl-tRNA(Ser) + AMP + diphosphate + H(+). The catalysed reaction is tRNA(Sec) + L-serine + ATP = L-seryl-tRNA(Sec) + AMP + diphosphate + H(+). It functions in the pathway aminoacyl-tRNA biosynthesis; selenocysteinyl-tRNA(Sec) biosynthesis; L-seryl-tRNA(Sec) from L-serine and tRNA(Sec): step 1/1. Its function is as follows. Catalyzes the attachment of serine to tRNA(Ser). Is also able to aminoacylate tRNA(Sec) with serine, to form the misacylated tRNA L-seryl-tRNA(Sec), which will be further converted into selenocysteinyl-tRNA(Sec). The polypeptide is Serine--tRNA ligase (Rickettsia prowazekii (strain Madrid E)).